The following is a 91-amino-acid chain: Dynein light chain 1, cytoplasmic (91 aa).

The protein belongs to the dynein light chain family. Homodimer. Cytoplasmic dynein consists of two catalytic heavy chains (HCs) and a number of non-catalytic subunits which present intermediate chains (ICs), light intermediate chains (LICs) and light chains (LCs). Component of the nuclear pore complex (NPC). NPC constitutes the exclusive means of nucleocytoplasmic transport. NPCs allow the passive diffusion of ions and small molecules and the active, nuclear transport receptor-mediated bidirectional transport of macromolecules such as proteins, RNAs, ribonucleoparticles (RNPs), and ribosomal subunits across the nuclear envelope. Due to its 8-fold rotational symmetry, all subunits are present with 8 copies or multiples thereof.

The protein resides in the cytoplasm. It is found in the cytoskeleton. It localises to the nucleus. The protein localises to the nuclear pore complex. Functionally, acts as one of several non-catalytic accessory components of the cytoplasmic dynein complex that are thought to be involved in linking dynein to cargos and to adapter proteins that regulate dynein function. Cytoplasmic dynein 1 acts as a motor for the intracellular retrograde motility of vesicles and organelles along microtubules. May play a role in changing or maintaining the spatial distribution of cytoskeletal structures. Also a component of the nuclear pore complex. In Debaryomyces hansenii (strain ATCC 36239 / CBS 767 / BCRC 21394 / JCM 1990 / NBRC 0083 / IGC 2968) (Yeast), this protein is Dynein light chain 1, cytoplasmic (DYN2).